The chain runs to 350 residues: Very-long-chain 3-oxoacyl-CoA reductase (350 aa).

Residues 20-40 (ALLFSLLFGVFKLTTFTLRFA) traverse the membrane as a helical segment. NADP(+)-binding residues include V66, D120, N147, Y221, K225, V254, and S256. Residue Y221 is the Proton donor of the active site. K225 functions as the Lowers pKa of active site Tyr in the catalytic mechanism.

This sequence belongs to the short-chain dehydrogenases/reductases (SDR) family.

The protein localises to the endoplasmic reticulum membrane. It catalyses the reaction a very-long-chain (3R)-3-hydroxyacyl-CoA + NADP(+) = a very-long-chain 3-oxoacyl-CoA + NADPH + H(+). The protein operates within lipid metabolism; fatty acid biosynthesis. In terms of biological role, component of the microsomal membrane bound fatty acid elongation system, which produces the 26-carbon very long-chain fatty acids (VLCFA) from palmitate. Catalyzes the reduction of the 3-ketoacyl-CoA intermediate that is formed in each cycle of fatty acid elongation. VLCFAs serve as precursors for ceramide and sphingolipids. The polypeptide is Very-long-chain 3-oxoacyl-CoA reductase (Lodderomyces elongisporus (strain ATCC 11503 / CBS 2605 / JCM 1781 / NBRC 1676 / NRRL YB-4239) (Yeast)).